The chain runs to 552 residues: Putative transport protein NT01EI_3867 (552 aa).

5 helical membrane-spanning segments follow: residues 4–24 (IALT…IGNW), 26–46 (IYGV…VGHF), 65–85 (FGLI…FFSS), 90–112 (GLRL…AAIH), and 158–178 (MGYA…IWLI). 2 consecutive RCK C-terminal domains span residues 191–276 (RDFD…VIGE) and 279–361 (DTSL…IVGN). 6 helical membrane passes run 371 to 391 (MLPV…PLFI), 403 to 425 (AGGP…LYWF), 439 to 459 (IVLF…DTLL), 464 to 484 (VTWI…AALL), 493 to 513 (YLTL…LAFA), and 530 to 550 (VYPL…LLFW).

This sequence belongs to the AAE transporter (TC 2.A.81) family. YidE subfamily.

The protein localises to the cell membrane. The polypeptide is Putative transport protein NT01EI_3867 (Edwardsiella ictaluri (strain 93-146)).